Consider the following 311-residue polypeptide: Sulfate adenylyltransferase subunit 2 (311 aa).

Belongs to the PAPS reductase family. CysD subfamily. In terms of assembly, heterodimer composed of CysD, the smaller subunit, and CysN.

The enzyme catalyses sulfate + ATP + H(+) = adenosine 5'-phosphosulfate + diphosphate. It participates in sulfur metabolism; hydrogen sulfide biosynthesis; sulfite from sulfate: step 1/3. Its function is as follows. With CysN forms the ATP sulfurylase (ATPS) that catalyzes the adenylation of sulfate producing adenosine 5'-phosphosulfate (APS) and diphosphate, the first enzymatic step in sulfur assimilation pathway. APS synthesis involves the formation of a high-energy phosphoric-sulfuric acid anhydride bond driven by GTP hydrolysis by CysN coupled to ATP hydrolysis by CysD. The chain is Sulfate adenylyltransferase subunit 2 from Methylobacterium sp. (strain 4-46).